Here is a 400-residue protein sequence, read N- to C-terminus: MTYQAPDENGFYGKFGGRFVPETLMKAVKELDEAYRASKTDPAFQKELNYYLKEYVGRETPLYFAEQLTAHAGGAKIYLKREDLNHTGAHKINNTIGQALLARQMGKQKVVAETGAGQHGVATATVAALFNMECTIFMGEEDVKRQSLNVFRMELLGAKVVSVKAGSRTLKDAVNEALRFWVANVEDTHYIMGSVLGPHPFPEIVRDYQSVIGIEARKQHLEKEGKLPDAIVACVGGGSNAMGLFYPFVDDVSVQMHGVEAAGHGLETEFHAATISKGEIGILHGAMMDVLQDENGQILEAFSISAGLDYPGIGPEHSFFRDLGRAAYHSVTDDEAVEAFQLLCRTEGIIPALESSHAISYAVKLASQMRPEESMVVCLSGRGDKDVNQLKERLEGQTND.

An N6-(pyridoxal phosphate)lysine modification is found at Lys91.

Belongs to the TrpB family. Tetramer of two alpha and two beta chains. Pyridoxal 5'-phosphate is required as a cofactor.

The enzyme catalyses (1S,2R)-1-C-(indol-3-yl)glycerol 3-phosphate + L-serine = D-glyceraldehyde 3-phosphate + L-tryptophan + H2O. Its pathway is amino-acid biosynthesis; L-tryptophan biosynthesis; L-tryptophan from chorismate: step 5/5. Its function is as follows. The beta subunit is responsible for the synthesis of L-tryptophan from indole and L-serine. This Listeria monocytogenes serotype 4a (strain HCC23) protein is Tryptophan synthase beta chain.